A 279-amino-acid chain; its full sequence is MDDDGFRNWGYYEPAAATFKGNLGLQLMSTIDRNTKPFLPGRDPNLMMGPNGSYHHQEPPIHMSYNWINQQKDKFFNMLPVTTATPNYGNVLPETSSAPSMQMNLHHHLQTEENPVKLEEEIVVQTKKRKTNAKAGSTPKAKKPRKPKDENSNNNNNNNTNVTRVKPAKKSVDLVINGVSMDISGLPVPICTCTGAPQQCYRWGCGGWQSACCTTNISMHPLPMSTKRRGARISGRKMSQGAFKKVLEKLASDGFNFGNPIDLKSHWARHGTNKFVTIR.

Residues 126 to 167 form a disordered region; it reads TKKRKTNAKAGSTPKAKKPRKPKDENSNNNNNNNTNVTRVKP. Residues 152–161 show a composition bias toward low complexity; that stretch reads SNNNNNNNTN.

It belongs to the BBR/BPC family. Expressed in seedlings, leaves and pistils. Detected in the base of flowers and tips of carpels, in sepal and petal vasculature, in pollen grains, in young rosette, in the lateral and tip of primary roots, and in ovule at the exception of the outer integument.

It is found in the nucleus. Functionally, transcriptional regulator that specifically binds to GA-rich elements (GAGA-repeats) present in regulatory sequences of genes involved in developmental processes. This is Protein BASIC PENTACYSTEINE2 from Arabidopsis thaliana (Mouse-ear cress).